The sequence spans 299 residues: Tyrosine recombinase XerC (299 aa).

The Core-binding (CB) domain maps to Pro-3–Leu-87. A Tyr recombinase domain is found at Pro-108 to Asp-287. Active-site residues include Arg-147, Lys-171, His-239, Arg-242, and His-265. Residue Tyr-274 is the O-(3'-phospho-DNA)-tyrosine intermediate of the active site.

The protein belongs to the 'phage' integrase family. XerC subfamily. In terms of assembly, forms a cyclic heterotetrameric complex composed of two molecules of XerC and two molecules of XerD.

The protein localises to the cytoplasm. Its function is as follows. Site-specific tyrosine recombinase, which acts by catalyzing the cutting and rejoining of the recombining DNA molecules. The XerC-XerD complex is essential to convert dimers of the bacterial chromosome into monomers to permit their segregation at cell division. It also contributes to the segregational stability of plasmids. The polypeptide is Tyrosine recombinase XerC (Shewanella sp. (strain ANA-3)).